Reading from the N-terminus, the 304-residue chain is 15-cis-phytoene synthase (304 aa).

This sequence belongs to the phytoene/squalene synthase family. The cofactor is ATP. Requires Mn(2+) as cofactor. It depends on Mg(2+) as a cofactor.

The enzyme catalyses 2 (2E,6E,10E)-geranylgeranyl diphosphate = 15-cis-phytoene + 2 diphosphate. The protein operates within carotenoid biosynthesis; astaxanthin biosynthesis. It participates in carotenoid biosynthesis; phytoene biosynthesis. Involved in the biosynthesis of carotenoids for the production of astaxanthin. Catalyzes the condensation of two molecules of geranylgeranyl diphosphate (GGPP) to give prephytoene diphosphate (PPPP) and the subsequent rearrangement of the cyclopropylcarbinyl intermediate to yield 15-cis phytoene. In Paracoccus sp. (strain N81106 / MBIC 01143) (Agrobacterium aurantiacum), this protein is 15-cis-phytoene synthase (crtB).